Reading from the N-terminus, the 345-residue chain is N(4)-(Beta-N-acetylglucosaminyl)-L-asparaginase (345 aa).

The N-terminal stretch at 1–23 (MARKWNLPFLLLPLVLGIPLVRG) is a signal peptide. N-linked (GlcNAc...) asparagine glycosylation occurs at N38. An intrachain disulfide couples C64 to C69. The N-linked (GlcNAc...) asparagine glycan is linked to N149. C163 and C179 are joined by a disulfide. Catalysis depends on T205, which acts as the Nucleophile. Residues 233-236 (RVGD) and 256-259 (TGDG) contribute to the substrate site. C285 and C305 are joined by a disulfide. N307 is a glycosylation site (N-linked (GlcNAc...) asparagine). C316 and C344 are oxidised to a cystine.

It belongs to the Ntn-hydrolase family. In terms of assembly, heterotetramer of two alpha and two beta chains arranged as a dimer of alpha/beta heterodimers. N-glycosylated. In terms of processing, cleaved into an alpha and beta chain by autocatalysis; this activates the enzyme. The N-terminal residue of the beta subunit is responsible for the nucleophile hydrolase activity.

The protein localises to the lysosome. It catalyses the reaction N(4)-(beta-N-acetyl-D-glucosaminyl)-L-asparagine + H2O = N-acetyl-beta-D-glucosaminylamine + L-aspartate + H(+). In terms of biological role, cleaves the GlcNAc-Asn bond which joins oligosaccharides to the peptide of asparagine-linked glycoproteins. The sequence is that of N(4)-(Beta-N-acetylglucosaminyl)-L-asparaginase (Aga) from Rattus norvegicus (Rat).